The chain runs to 87 residues: uncharacterized protein (87 aa).

A run of 2 helical transmembrane segments spans residues 10-30 and 43-63; these read VAFT…FSIG and GYYI…QKVT.

Its subcellular location is the cell membrane. This is an uncharacterized protein from Bacillus subtilis (strain 168).